The following is a 557-amino-acid chain: Selenoprotein N (557 aa).

The segment covering 1–21 (MAADVDKTPAGEQKDDHEDRG) has biased composition (basic and acidic residues). Residues 1-28 (MAADVDKTPAGEQKDDHEDRGTPSSRRG) form a disordered region. A helical transmembrane segment spans residues 35-55 (ISSLFIIAAIPVIGVCIKYYL). Residue U430 is a non-standard amino acid, selenocysteine. N451 and N499 each carry an N-linked (GlcNAc...) asparagine glycan.

In terms of assembly, interacts with ryr3.

The protein resides in the endoplasmic reticulum membrane. Functionally, plays an important role in cell protection against oxidative stress and in the regulation of redox-related calcium homeostasis. Regulates the calcium level of the ER by protecting the calcium pump ATP2A2 against the oxidoreductase ERO1A-mediated oxidative damage. Acts as a modulator of ryanodine receptor (RyR) activity: protects RyR from oxidation due to increased oxidative stress, or directly controls the RyR redox state, regulating the RyR-mediated calcium mobilization required for normal muscle development and differentiation. Plays an important role in muscle development and differentiation during early development. Required for development of the slow muscle fiber lineage. Required for the correct organization and attachment of the myofibrils, as well as for the continuity and integrity of the connective tissue that forms the myoseptum. The polypeptide is Selenoprotein N (Danio rerio (Zebrafish)).